A 564-amino-acid chain; its full sequence is MIKTTIIASIKDLIKDAVKDKFKITIDLNDFVVDKAKSIEFGDFYSNVAMILASKLKKNPILIAEEICEYLKNHKTNLFESTEAVKPGYINVFLSNSVKSDLFKQINKDKDTYGIFEPKKVAYNIEFVSANPTGSLHIGHARNAALGQTLGNVWKAYGYTIEQEYYINDGGNQINNLGMSVFYRYLQKCGKDVQMEEDFYQGSEPIAVAELIYKEHKDKFVNVKYSATKIEDEKVFDFFRDFSKTELMNIIKKDLKDFSVHFDRYFPESKIYEMKLVDPTIKKLGKYVYEKDGALWLKTTEFGDDKDRVIVKSDKSFTYFMPDIAYHDIKATRTINGLKTDKIFNIWGADHASYVDRMTVALQCLGFKKDIMHVIVMQMVKLTKNGKEFKMSKRSGNSLTLRDLINAIGVDNSRWELISQAAESHIEIDVEKFTSADSTSNLSYVLYAYSRIQKILEKNESLLKESKSYNTDLLTNLKEKDMIAMLFYYPQTIANIAKSYEVHKIPIFLYTLANLLHSYYSEVKIIDESNKELLIQRLHLLQCVNQVIKNGLKLLDIEAKVLNK.

The 'HIGH' region signature appears at 130–140 (ANPTGSLHIGH).

It belongs to the class-I aminoacyl-tRNA synthetase family. Monomer.

It localises to the cytoplasm. It carries out the reaction tRNA(Arg) + L-arginine + ATP = L-arginyl-tRNA(Arg) + AMP + diphosphate. This is Arginine--tRNA ligase from Malacoplasma penetrans (strain HF-2) (Mycoplasma penetrans).